Here is a 358-residue protein sequence, read N- to C-terminus: UDP-N-acetylglucosamine--N-acetylmuramyl-(pentapeptide) pyrophosphoryl-undecaprenol N-acetylglucosamine transferase (358 aa).

UDP-N-acetyl-alpha-D-glucosamine-binding positions include 11–13, R163, S191, I245, and Q290; that span reads TGG.

The protein belongs to the glycosyltransferase 28 family. MurG subfamily.

It localises to the cell inner membrane. It carries out the reaction di-trans,octa-cis-undecaprenyl diphospho-N-acetyl-alpha-D-muramoyl-L-alanyl-D-glutamyl-meso-2,6-diaminopimeloyl-D-alanyl-D-alanine + UDP-N-acetyl-alpha-D-glucosamine = di-trans,octa-cis-undecaprenyl diphospho-[N-acetyl-alpha-D-glucosaminyl-(1-&gt;4)]-N-acetyl-alpha-D-muramoyl-L-alanyl-D-glutamyl-meso-2,6-diaminopimeloyl-D-alanyl-D-alanine + UDP + H(+). Its pathway is cell wall biogenesis; peptidoglycan biosynthesis. Cell wall formation. Catalyzes the transfer of a GlcNAc subunit on undecaprenyl-pyrophosphoryl-MurNAc-pentapeptide (lipid intermediate I) to form undecaprenyl-pyrophosphoryl-MurNAc-(pentapeptide)GlcNAc (lipid intermediate II). This chain is UDP-N-acetylglucosamine--N-acetylmuramyl-(pentapeptide) pyrophosphoryl-undecaprenol N-acetylglucosamine transferase, found in Janthinobacterium sp. (strain Marseille) (Minibacterium massiliensis).